We begin with the raw amino-acid sequence, 70 residues long: Large ribosomal subunit protein bL31 (70 aa).

The Zn(2+) site is built by Cys16, Cys18, Cys37, and Cys40.

The protein belongs to the bacterial ribosomal protein bL31 family. Type A subfamily. As to quaternary structure, part of the 50S ribosomal subunit. Zn(2+) is required as a cofactor.

Functionally, binds the 23S rRNA. The chain is Large ribosomal subunit protein bL31 from Shewanella amazonensis (strain ATCC BAA-1098 / SB2B).